A 212-amino-acid polypeptide reads, in one-letter code: Putative tyrosine-protein phosphatase R622 (212 aa).

The 183-residue stretch at 9–191 (KISQVTNNIF…LQGYQSKKEN (183 aa)) folds into the Tyrosine-protein phosphatase domain. Catalysis depends on cysteine 135, which acts as the Phosphocysteine intermediate.

This sequence belongs to the protein-tyrosine phosphatase family. Non-receptor class dual specificity subfamily.

It carries out the reaction O-phospho-L-tyrosyl-[protein] + H2O = L-tyrosyl-[protein] + phosphate. This chain is Putative tyrosine-protein phosphatase R622, found in Acanthamoeba polyphaga mimivirus (APMV).